The sequence spans 176 residues: Probable inosine/xanthosine triphosphatase (176 aa).

Residue aspartate 36 participates in Mg(2+) binding.

The protein belongs to the YjjX NTPase family. Homodimer. Mg(2+) serves as cofactor. It depends on Mn(2+) as a cofactor.

It carries out the reaction XTP + H2O = XDP + phosphate + H(+). It catalyses the reaction ITP + H2O = IDP + phosphate + H(+). Phosphatase that hydrolyzes non-canonical purine nucleotides such as XTP and ITP to their respective diphosphate derivatives. Probably excludes non-canonical purines from DNA/RNA precursor pool, thus preventing their incorporation into DNA/RNA and avoiding chromosomal lesions. The sequence is that of Probable inosine/xanthosine triphosphatase from Saccharolobus islandicus (strain Y.G.57.14 / Yellowstone #1) (Sulfolobus islandicus).